We begin with the raw amino-acid sequence, 50 residues long: Ampulexin 2 (50 aa).

The first 26 residues, methionine 1 to proline 26, serve as a signal peptide directing secretion.

As to quaternary structure, dimer; disulfide-linked. In terms of tissue distribution, expressed in venom sac and, to a lesser extent, in venom gland. Not expressed in brain.

It is found in the secreted. Amphipathic peptide which probably adopts an alpha-helical structure. Has no antimicrobial activity against E.coli DH5alpha or B.thuringiensis. Is not cytotoxic in vitro. This is Ampulexin 2 from Ampulex compressa (Emerald cockroach wasp).